The sequence spans 123 residues: Probable cytochrome c 2.2 (123 aa).

A disordered region spans residues 1 to 21 (MGKKKSDTASGGAIPEGDNEK). Cys30, Cys33, His34, and Met95 together coordinate heme c.

The protein belongs to the cytochrome c family. Binds 1 heme c group covalently per subunit.

Its subcellular location is the mitochondrion intermembrane space. Its function is as follows. Electron carrier protein. The oxidized form of the cytochrome c heme group can accept an electron from the heme group of the cytochrome c1 subunit of cytochrome reductase. Cytochrome c then transfers this electron to the cytochrome oxidase complex, the final protein carrier in the mitochondrial electron-transport chain. The sequence is that of Probable cytochrome c 2.2 (cyc-2.2) from Caenorhabditis elegans.